We begin with the raw amino-acid sequence, 223 residues long: Deoxyribose-phosphate aldolase (223 aa).

The Proton donor/acceptor role is filled by D89. The active-site Schiff-base intermediate with acetaldehyde is the K154. The active-site Proton donor/acceptor is the K183.

Belongs to the DeoC/FbaB aldolase family. DeoC type 1 subfamily.

It localises to the cytoplasm. It carries out the reaction 2-deoxy-D-ribose 5-phosphate = D-glyceraldehyde 3-phosphate + acetaldehyde. It functions in the pathway carbohydrate degradation; 2-deoxy-D-ribose 1-phosphate degradation; D-glyceraldehyde 3-phosphate and acetaldehyde from 2-deoxy-alpha-D-ribose 1-phosphate: step 2/2. In terms of biological role, catalyzes a reversible aldol reaction between acetaldehyde and D-glyceraldehyde 3-phosphate to generate 2-deoxy-D-ribose 5-phosphate. The chain is Deoxyribose-phosphate aldolase from Thermoanaerobacter pseudethanolicus (strain ATCC 33223 / 39E) (Clostridium thermohydrosulfuricum).